A 122-amino-acid polypeptide reads, in one-letter code: Large ribosomal subunit protein uL14 (122 aa).

The protein belongs to the universal ribosomal protein uL14 family. In terms of assembly, part of the 50S ribosomal subunit. Forms a cluster with proteins L3 and L19. In the 70S ribosome, L14 and L19 interact and together make contacts with the 16S rRNA in bridges B5 and B8.

In terms of biological role, binds to 23S rRNA. Forms part of two intersubunit bridges in the 70S ribosome. The sequence is that of Large ribosomal subunit protein uL14 from Rhodospirillum centenum (strain ATCC 51521 / SW).